We begin with the raw amino-acid sequence, 300 residues long: Delta-9 desaturase-like 4 protein (300 aa).

Transmembrane regions (helical) follow at residues 39-59 (VVVIVHFLCLLAPFNFKWEAL) and 61-81 (FGLVLFALTTLSITFSFHRNL). The short motif at 78-83 (HRNLSH) is the Histidine box-1 element. A Histidine box-2 motif is present at residues 115-119 (HRFHH). 2 helical membrane passes run 175-195 (IAVHILMFWTILYLYGGLPYL) and 200-220 (GVGIFIGYHVTWLVNSACHIW). The short motif at 247–251 (HNNHH) is the Histidine box-3 element.

Belongs to the fatty acid desaturase type 1 family. It depends on Fe cation as a cofactor.

The protein resides in the endoplasmic reticulum membrane. It functions in the pathway lipid metabolism; polyunsaturated fatty acid biosynthesis. The chain is Delta-9 desaturase-like 4 protein from Arabidopsis thaliana (Mouse-ear cress).